Here is a 118-residue protein sequence, read N- to C-terminus: UPF0102 protein lpp3065 (118 aa).

The protein belongs to the UPF0102 family.

This is UPF0102 protein lpp3065 from Legionella pneumophila (strain Paris).